A 442-amino-acid polypeptide reads, in one-letter code: ATP-dependent RNA helicase SUB2 (442 aa).

The Q motif signature appears at 59-87 (TGFRDFLLKGELLRAITDCGFEHPSEVQQ). In terms of domain architecture, Helicase ATP-binding spans 90-265 (IPTAILNVDV…KKFMRNPLEV (176 aa)). Residue 103 to 110 (AKSGLGKT) participates in ATP binding. The short motif at 212–215 (DECD) is the DECD box element. Residues 293 to 438 (KLNELLDSLE…EYPQGGVDSS (146 aa)) enclose the Helicase C-terminal domain.

The protein belongs to the DEAD box helicase family. DECD subfamily.

It localises to the nucleus. The enzyme catalyses ATP + H2O = ADP + phosphate + H(+). ATP-binding RNA helicase involved in transcription elongation and required for the export of mRNA out of the nucleus. SUB2 also plays a role in pre-mRNA splicing and spliceosome assembly. May be involved in rDNA and telomeric silencing, and maintenance of genome integrity. This chain is ATP-dependent RNA helicase SUB2 (SUB2), found in Ajellomyces capsulatus (strain NAm1 / WU24) (Darling's disease fungus).